Reading from the N-terminus, the 191-residue chain is Cytochrome b-245 light chain (191 aa).

Topologically, residues 2–7 are cytoplasmic; the sequence is GQIEWA. Residues 8–30 form a helical membrane-spanning segment; sequence MWANEQALASGLILITGGIVATA. Residues 31-35 lie on the Extracellular side of the membrane; it reads GQFTQ. The chain crosses the membrane as a helical span at residues 36-53; it reads WYLGAYSIAAGVLVCLLE. The Cytoplasmic portion of the chain corresponds to 54-69; sequence YPRGKRSKGSTMERCG. Residues 70 to 80 lie within the membrane without spanning it; the sequence is QKYLTRVVKLF. The Cytoplasmic portion of the chain corresponds to 81 to 86; it reads GPLTRN. The helical transmembrane segment at 87 to 104 threads the bilayer; it reads YYIRAFLHLGLAVPAGFL. Residue Leu-105 is a topological domain, extracellular. A helical membrane pass occupies residues 106 to 126; sequence ATILGTACLAIASGIYLLAAI. At 127–191 the chain is on the cytoplasmic side; the sequence is RGEQWSPIEP…NPMPVNDEVV (65 aa). Positions 134–191 are disordered; the sequence is IEPKPKERPQIGGTIKQPPSNPPPRPPAEARKKLSEEAAGVPTGGPQENPMPVNDEVV. Position 147 is a phosphothreonine (Thr-147). Lys-149 participates in a covalent cross-link: Glycyl lysine isopeptide (Lys-Gly) (interchain with G-Cter in ubiquitin). Ser-168 is modified (phosphoserine).

Belongs to the p22phox family. As to quaternary structure, component of the phagocyte NADPH oxidase core complex/cytochrome b558 complex, composed of CYBB (heavy chain (beta)) and CYBA (light chain (alpha)). Component of the phagocyte NADPH oxidase complex composed of an obligatory core heterodimer formed by the membrane proteins CYBA and CYBB and the cytosolic regulatory subunits NCF1/p47-phox, NCF2/p67-phox, NCF4/p40-phox and the small GTPase RAC1 or RAC2. Interacts with NCF1 (via SH3 domain). Interacts with SH3PXD2A. Interacts with DUOX1, DUOX2 and TPO. Interacts with NOX4; this interaction mediates superoxide generation. Interacts with calprotectin (S100A8/9). Interacts with GBP7. Interacts with NOXO1. Forms a heterodimer with NOX3 and is essential for activity and cell membrane localization of NOX3. Interacts with NOX1. Phosphorylation at Thr-147 enhances NADPH oxidase activity by promoting NCF1/p47-phox binding. In terms of processing, ubiquitinated at Lys-149 likely by RNF145.

It is found in the cell membrane. In terms of biological role, subunit of NADPH oxidase complexes that is required for the NADPH oxidase activity that generates, in various cell types, superoxide from molecular oxygen utilizing NADPH as an electron donor. Subunit of the phagocyte NADPH oxidase complex that mediates the transfer of electrons from cytosolic NADPH to O2 to produce the superoxide anion (O2(-)). In the activated complex, electrons are first transferred from NADPH to flavin adenine dinucleotide (FAD) and subsequently transferred via two heme molecules to molecular oxygen, producing superoxide through an outer-sphere reaction. Activation of the NADPH oxidase complex is initiated by the assembly of cytosolic subunits of the NADPH oxidase complex with the core NADPH oxidase complex to form a complex at the plasma membrane or phagosomal membrane. This activation process is initiated by phosphorylation dependent binding of the cytosolic NCF1/p47-phox subunit to the C-terminus of CYBA/p22-phox. Aassociates with NOX3 to form a functional NADPH oxidase constitutively generating superoxide. The chain is Cytochrome b-245 light chain from Bison bison (American bison).